The chain runs to 603 residues: Elongation factor 4 (603 aa).

A tr-type G domain is found at S7–A189. Residues D19–T24 and N136–D139 each bind GTP.

This sequence belongs to the TRAFAC class translation factor GTPase superfamily. Classic translation factor GTPase family. LepA subfamily.

It is found in the cell inner membrane. The catalysed reaction is GTP + H2O = GDP + phosphate + H(+). Its function is as follows. Required for accurate and efficient protein synthesis under certain stress conditions. May act as a fidelity factor of the translation reaction, by catalyzing a one-codon backward translocation of tRNAs on improperly translocated ribosomes. Back-translocation proceeds from a post-translocation (POST) complex to a pre-translocation (PRE) complex, thus giving elongation factor G a second chance to translocate the tRNAs correctly. Binds to ribosomes in a GTP-dependent manner. The polypeptide is Elongation factor 4 (Synechocystis sp. (strain ATCC 27184 / PCC 6803 / Kazusa)).